Reading from the N-terminus, the 165-residue chain is Protein NKG7 (165 aa).

4 consecutive transmembrane segments (helical) span residues 9-29 (LFAG…DFWI), 61-81 (FCIL…LSCI), 92-112 (LVST…MAVY), and 133-153 (FYLG…SLGA).

Belongs to the PMP-22/EMP/MP20 family. Predominantly expressed by leukocytes with cytotoxic activity such as CD8(+) T-cells and natural killer cells.

It localises to the cell membrane. The protein localises to the cytolytic granule membrane. Regulates cytotoxic granule exocytosis in effector lymphocytes, thus acting as a critical mediator of inflammation in a broad range of infectious and non-infectious diseases. Essential for cytotoxic degranulation of natural killer (NK) cells and CD8(+) T-cells and for the activation of CD4(+) T-cells following infection. Plays a critical role in CD8(+) T-cell and NK cell-mediated cytolysis of target cells and contributes to the cytolytic activity via the perforin/granzyme pathway by enhancing exocytosis of LAMP1-carrying lytic granules. Contributes to NK cell-mediated control of cancer metastasis. In Mus musculus (Mouse), this protein is Protein NKG7 (Nkg7).